The primary structure comprises 528 residues: GMP synthase [glutamine-hydrolyzing] (528 aa).

A Glutamine amidotransferase type-1 domain is found at 13-204 (AIVILDFGSQ…VYHICGCEPD (192 aa)). Cys-90 serves as the catalytic Nucleophile. Active-site residues include His-178 and Glu-180. A GMPS ATP-PPase domain is found at 205–403 (WTTEAFIDEA…LGLPEEIVSR (199 aa)). Residue 232–238 (SGGVDSS) participates in ATP binding.

Homodimer.

It carries out the reaction XMP + L-glutamine + ATP + H2O = GMP + L-glutamate + AMP + diphosphate + 2 H(+). Its pathway is purine metabolism; GMP biosynthesis; GMP from XMP (L-Gln route): step 1/1. Its function is as follows. Catalyzes the synthesis of GMP from XMP. This chain is GMP synthase [glutamine-hydrolyzing], found in Synechococcus sp. (strain CC9311).